We begin with the raw amino-acid sequence, 161 residues long: Protein-export protein SecB (161 aa).

It belongs to the SecB family. Homotetramer, a dimer of dimers. One homotetramer interacts with 1 SecA dimer.

The protein resides in the cytoplasm. One of the proteins required for the normal export of preproteins out of the cell cytoplasm. It is a molecular chaperone that binds to a subset of precursor proteins, maintaining them in a translocation-competent state. It also specifically binds to its receptor SecA. The polypeptide is Protein-export protein SecB (Pseudomonas fluorescens (strain Pf0-1)).